The sequence spans 339 residues: MSSQPVTFQAPVAPIVPTAWPVDDVLALFNLPFNELMFRAQTVHREHFDPSEVELATLLSIKTGGCPEDCGYCPQAARYDTGVTAQKILPLEEVLTAAREAKAHGATRFCMGAAWREPKDRDLEKVEEMVREVKAMGMETCATLGMLGEGQAEKLKNAGLDYYNHNLDTAPEFYSNVISTRDYQNRIDTLARVRNVGIKVCCGGIVGMGESRLQRAGLIAQLCNMDPYPESVPVNNLVQVEGTPLHGTDPIDPLEFVRTVAVARITMPKARVRLSAGRREMGEAIQALCFVAGANSIFYGDKLLTTGNPEALADQELLEKLGMHTRSTAIDARCDVTPS.

The Radical SAM core domain occupies 51–278; sequence SEVELATLLS…KARVRLSAGR (228 aa). 3 residues coordinate [4Fe-4S] cluster: C66, C70, and C73. Residues C110, C141, C201, and R273 each coordinate [2Fe-2S] cluster.

The protein belongs to the radical SAM superfamily. Biotin synthase family. In terms of assembly, homodimer. It depends on [4Fe-4S] cluster as a cofactor. [2Fe-2S] cluster is required as a cofactor.

It carries out the reaction (4R,5S)-dethiobiotin + (sulfur carrier)-SH + 2 reduced [2Fe-2S]-[ferredoxin] + 2 S-adenosyl-L-methionine = (sulfur carrier)-H + biotin + 2 5'-deoxyadenosine + 2 L-methionine + 2 oxidized [2Fe-2S]-[ferredoxin]. Its pathway is cofactor biosynthesis; biotin biosynthesis; biotin from 7,8-diaminononanoate: step 2/2. In terms of biological role, catalyzes the conversion of dethiobiotin (DTB) to biotin by the insertion of a sulfur atom into dethiobiotin via a radical-based mechanism. This chain is Biotin synthase, found in Herminiimonas arsenicoxydans.